A 626-amino-acid chain; its full sequence is 5'-AMP-activated protein kinase catalytic subunit alpha-2 (626 aa).

Residues 1–24 are compositionally biased toward basic and acidic residues; it reads MFSHQDRDRDRKEDGGGDGTEMKS. Positions 1 to 77 are disordered; the sequence is MFSHQDRDRD…GETSTKQQQE (77 aa). Residues 38 to 49 are compositionally biased toward basic residues; that stretch reads NLSRKLSAKSRK. Over residues 58–77 the composition is skewed to polar residues; the sequence is DNSSKMSSPGGETSTKQQQE. The Protein kinase domain occupies 87-339; it reads YILKETLGVG…IKDVIAHEWF (253 aa). ATP contacts are provided by residues 93 to 101 and lysine 116; that span reads LGVGTFGKV. The active-site Proton acceptor is aspartate 210. Threonine 243 is modified (phosphothreonine; by par-4). The tract at residues 541-568 is disordered; the sequence is SGSASASSSRHASMSMPQKPAGIRGTRT. Positions 542 to 555 are enriched in low complexity; it reads GSASASSSRHASMS.

It belongs to the protein kinase superfamily. CAMK Ser/Thr protein kinase family. SNF1 subfamily. Tetramer, composed of 2 regulatory (R) and 2 catalytic (C) subunits. In the presence of cAMP it dissociates into 2 active monomeric C subunits and an R dimer that binds four cAMP molecules. Phosphorylated on Thr-243 in response to oxidative stress and during dauer development. Phosphorylation at Thr-243 is increased in response to sodium azide or the AMP analog AICAR (5-amino-1-(5-phospho-beta-D-ribosyl)imidazole-4-carboxamide). Expressed in the pharynx, the ventral cord, neurons including the hermaphrodite-specific neuron, body wall muscles, the vulva, the excretory canal, and weakly in the intestine.

It catalyses the reaction L-seryl-[protein] + ATP = O-phospho-L-seryl-[protein] + ADP + H(+). The catalysed reaction is L-threonyl-[protein] + ATP = O-phospho-L-threonyl-[protein] + ADP + H(+). Activated by phosphorylation. Acts as a sensor that couples lifespan to information about energy levels and insulin-like signals. Role in motility and response to oxidative stress. Involved in the establishment of germline stem cell (GSC) quiescence during dauer development. Plays a role in axon regrowth after axotomy in PLM neurons. Plays a role in the maintenance of glycogen stores which are necessary for resistance to hyperosmotic stress. Plays a role in the regulation of flp-7 secretion from ASI neurons. Keeps the CREB-regulated transcription coactivator 1 homolog crtc-1 inactive which in turn inhibits flp-7 secretion. Following serotonin signaling, derepresses crtc-1 which stimulates flp-7 secretion and subsequent body fat loss. The polypeptide is 5'-AMP-activated protein kinase catalytic subunit alpha-2 (Caenorhabditis elegans).